The chain runs to 226 residues: uncharacterized protein (226 aa).

The ABC transporter domain maps to 4–226 (LQFQQVGYWY…FTVKENVAVV (223 aa)). 38-45 (GTSGTGKT) serves as a coordination point for ATP.

The protein belongs to the ABC transporter superfamily.

This is an uncharacterized protein from Bacillus subtilis (strain 168).